The following is a 600-amino-acid chain: Kynurenine 3-monooxygenase (600 aa).

Positions 217–242 (GDSCADEPSGCGGRKQATTKSQGSEY) are disordered.

It belongs to the aromatic-ring hydroxylase family. KMO subfamily. FAD serves as cofactor.

Its subcellular location is the mitochondrion outer membrane. It carries out the reaction L-kynurenine + NADPH + O2 + H(+) = 3-hydroxy-L-kynurenine + NADP(+) + H2O. It participates in cofactor biosynthesis; NAD(+) biosynthesis; quinolinate from L-kynurenine: step 1/3. Catalyzes the hydroxylation of L-kynurenine (L-Kyn) to form 3-hydroxy-L-kynurenine (L-3OHKyn). Required for synthesis of quinolinic acid. The chain is Kynurenine 3-monooxygenase from Mycosarcoma maydis (Corn smut fungus).